A 31-amino-acid polypeptide reads, in one-letter code: MCLLVIKSVMLSIVISLRRLLDYLDLTLQVL.

This is an uncharacterized protein from Chlamydia phage 1 (Bacteriophage Chp1).